Here is a 367-residue protein sequence, read N- to C-terminus: 1-deoxy-D-xylulose 5-phosphate reductoisomerase (367 aa).

Residues Thr10, Gly11, Ser12, Ile13, Gly34, Lys35, Asn36, and Asn112 each coordinate NADPH. Lys113 provides a ligand contact to 1-deoxy-D-xylulose 5-phosphate. Glu114 is an NADPH binding site. Asp138 provides a ligand contact to Mn(2+). 4 residues coordinate 1-deoxy-D-xylulose 5-phosphate: Ser139, Glu140, Ser164, and His186. Glu140 is a Mn(2+) binding site. Gly192 contacts NADPH. Residues Ser199, Asn204, Lys205, and Glu208 each coordinate 1-deoxy-D-xylulose 5-phosphate. Glu208 is a Mn(2+) binding site.

It belongs to the DXR family. Requires Mg(2+) as cofactor. It depends on Mn(2+) as a cofactor.

It catalyses the reaction 2-C-methyl-D-erythritol 4-phosphate + NADP(+) = 1-deoxy-D-xylulose 5-phosphate + NADPH + H(+). It functions in the pathway isoprenoid biosynthesis; isopentenyl diphosphate biosynthesis via DXP pathway; isopentenyl diphosphate from 1-deoxy-D-xylulose 5-phosphate: step 1/6. Functionally, catalyzes the NADPH-dependent rearrangement and reduction of 1-deoxy-D-xylulose-5-phosphate (DXP) to 2-C-methyl-D-erythritol 4-phosphate (MEP). In Thermus thermophilus (strain ATCC BAA-163 / DSM 7039 / HB27), this protein is 1-deoxy-D-xylulose 5-phosphate reductoisomerase.